Reading from the N-terminus, the 254-residue chain is Small ribosomal subunit protein mS40 (254 aa).

The transit peptide at 1–33 (MAAPLRHTLLKLVPTLLRSSYVAQVPLQTLCTR) directs the protein to the mitochondrion. Position 47 is a phosphoserine (Ser-47). A disordered region spans residues 218 to 254 (YQGNLLEESGPPPESMPEMPTTPPAESSIEQPGSQSA). Residues 227–240 (GPPPESMPEMPTTP) show a composition bias toward pro residues.

This sequence belongs to the bacterial ribosomal protein bS18 family. Mitochondrion-specific ribosomal protein mS40 subfamily. As to quaternary structure, component of the mitochondrial ribosome small subunit (28S) which comprises a 12S rRNA and about 30 distinct proteins.

The protein resides in the mitochondrion. This Mus musculus (Mouse) protein is Small ribosomal subunit protein mS40 (Mrps18b).